Here is a 199-residue protein sequence, read N- to C-terminus: FMN-dependent NADH:quinone oxidoreductase (199 aa).

FMN-binding positions include 17–19 and 87–90; these read SNS and MYNF.

It belongs to the azoreductase type 1 family. Homodimer. The cofactor is FMN.

The catalysed reaction is 2 a quinone + NADH + H(+) = 2 a 1,4-benzosemiquinone + NAD(+). It carries out the reaction N,N-dimethyl-1,4-phenylenediamine + anthranilate + 2 NAD(+) = 2-(4-dimethylaminophenyl)diazenylbenzoate + 2 NADH + 2 H(+). Quinone reductase that provides resistance to thiol-specific stress caused by electrophilic quinones. Functionally, also exhibits azoreductase activity. Catalyzes the reductive cleavage of the azo bond in aromatic azo compounds to the corresponding amines. This is FMN-dependent NADH:quinone oxidoreductase from Mycoplasma mycoides subsp. mycoides SC (strain CCUG 32753 / NCTC 10114 / PG1).